The primary structure comprises 349 residues: Peroxidase C3 (349 aa).

Residues 1 to 29 (MGFSPLISCSAMGALILSCLLLQASNSNA) form the signal peptide. 4 cysteine pairs are disulfide-bonded: cysteine 40-cysteine 120, cysteine 73-cysteine 78, cysteine 126-cysteine 329, and cysteine 206-cysteine 238. Histidine 71 serves as the catalytic Proton acceptor. Ca(2+) contacts are provided by aspartate 72, valine 75, glycine 77, aspartate 79, and serine 81. Residue asparagine 86 is glycosylated (N-linked (GlcNAc...) asparagine). A substrate-binding site is contributed by proline 168. A heme b-binding site is contributed by histidine 199. Residue threonine 200 coordinates Ca(2+). Residues asparagine 217 and asparagine 243 are each glycosylated (N-linked (GlcNAc...) asparagine). Ca(2+)-binding residues include aspartate 251, threonine 254, and aspartate 259.

Belongs to the peroxidase family. Classical plant (class III) peroxidase subfamily. It depends on Ca(2+) as a cofactor. Heme b serves as cofactor.

It localises to the secreted. It is found in the vacuole. It catalyses the reaction 2 a phenolic donor + H2O2 = 2 a phenolic radical donor + 2 H2O. In terms of biological role, removal of H(2)O(2), oxidation of toxic reductants, biosynthesis and degradation of lignin, suberization, auxin catabolism, response to environmental stresses such as wounding, pathogen attack and oxidative stress. These functions might be dependent on each isozyme/isoform in each plant tissue. The polypeptide is Peroxidase C3 (PRXC3) (Armoracia rusticana (Horseradish)).